The chain runs to 445 residues: UDP-N-acetylglucosamine--peptide N-acetylglucosaminyltransferase stabilizing protein GtfB (445 aa).

A glycosyltransferase 1 region spans residues 55–171; sequence KPLYFNQVPV…TLPGQSMRYF (117 aa).

The protein belongs to the GtfB family. Interacts with glycosyltransferase GtfA; probably forms a heterotetramer with 2 subunits each of GtfA and GtfB. Part of the accessory SecA2/SecY2 protein translocation apparatus.

It localises to the cell membrane. It participates in protein modification; protein glycosylation. Required for the polymorphic O-glycosylation of the serine-rich repeat protein PsrP. A stabilizing protein that is part of the accessory SecA2/SecY2 system specifically required to export serine-rich repeat cell wall proteins encoded upstream in the same operon. The GtfA-GtfB complex adds GlcNAc from UDP-GlcNAc to PsrP, attaching the first sugar residue. Stabilizes the glycosylation activity of GtfA. Has no N-acetylglucosaminyl transferase activity on its own. This is UDP-N-acetylglucosamine--peptide N-acetylglucosaminyltransferase stabilizing protein GtfB from Streptococcus pneumoniae serotype 4 (strain ATCC BAA-334 / TIGR4).